The sequence spans 129 residues: Histone H2B.1 (129 aa).

Residues 1–17 (MSAEKKPASKAPAEKKP) are compositionally biased toward basic and acidic residues. Positions 1–35 (MSAEKKPASKAPAEKKPAAKKTAPSADGKKRTKAR) are disordered. An N6-acetyllysine; alternate mark is found at K5 and K6. Residues K5 and K6 each participate in a glycyl lysine isopeptide (Lys-Gly) (interchain with G-Cter in SUMO); alternate cross-link. At S9 the chain carries Phosphoserine. At K10 the chain carries N6-acetyllysine. Position 15 is an N6-acetyllysine; alternate (K15). A Glycyl lysine isopeptide (Lys-Gly) (interchain with G-Cter in SUMO); alternate cross-link involves residue K15. Residue K16 forms a Glycyl lysine isopeptide (Lys-Gly) (interchain with G-Cter in SUMO) linkage. Residue K122 forms a Glycyl lysine isopeptide (Lys-Gly) (interchain with G-Cter in ubiquitin) linkage.

This sequence belongs to the histone H2B family. In terms of assembly, the nucleosome is a histone octamer containing two molecules each of H2A, H2B, H3 and H4 assembled in one H3-H4 heterotetramer and two H2A-H2B heterodimers. The octamer wraps approximately 147 bp of DNA. Post-translationally, monoubiquitinated by the UBC2-BRE1 complex to form H2BK123ub1. H2BK123ub1 gives a specific tag for epigenetic transcriptional activation and is also prerequisite for H3K4me and H3K79me formation. H2BK123ub1 also modulates the formation of double-strand breaks during meiosis and is a prerequisite for DNA-damage checkpoint activation. Phosphorylated by STE20 to form H2BS10ph during progression through meiotic prophase. May be correlated with chromosome condensation. In terms of processing, acetylated by GCN5 to form H2BK11ac and H2BK16ac. H2BK16ac can also be formed by ESA1. Acetylation of N-terminal lysines and particularly formation of H2BK11acK16ac has a positive effect on transcription. Post-translationally, sumoylation to form H2BK6su or H2BK7su, and probably also H2BK16su or H2BK17su, occurs preferentially near the telomeres and represses gene transcription.

The protein localises to the nucleus. It localises to the chromosome. Its function is as follows. Core component of nucleosome. Nucleosomes wrap and compact DNA into chromatin, limiting DNA accessibility to the cellular machineries which require DNA as a template. Histones thereby play a central role in transcription regulation, DNA repair, DNA replication and chromosomal stability. DNA accessibility is regulated via a complex set of post-translational modifications of histones, also called histone code, and nucleosome remodeling. This is Histone H2B.1 (HTB1) from Candida glabrata (strain ATCC 2001 / BCRC 20586 / JCM 3761 / NBRC 0622 / NRRL Y-65 / CBS 138) (Yeast).